Reading from the N-terminus, the 331-residue chain is Cysteine and histidine-rich domain-containing protein 1 (331 aa).

C5, C10, C24, H27, C42, C43, C59, H64, C157, C162, C176, H179, C194, C195, C211, and H216 together coordinate Zn(2+). 2 consecutive CHORD domains span residues 5 to 64 (CYNR…KGLH) and 157 to 216 (CKNA…TGTH). A CS domain is found at 227-316 (VVPCRHDWHQ…AEPLLWASLE (90 aa)).

In terms of biological role, regulates centrosome duplication. The chain is Cysteine and histidine-rich domain-containing protein 1 (CHORDC1) from Gallus gallus (Chicken).